The sequence spans 61 residues: Large ribosomal subunit protein eL37 (61 aa).

The Zn(2+) site is built by cysteine 19, cysteine 22, cysteine 34, and cysteine 37. The C4-type zinc-finger motif lies at 19-37 (CRRCGRNSFNARKGYCAAC).

This sequence belongs to the eukaryotic ribosomal protein eL37 family. Zn(2+) serves as cofactor.

Its function is as follows. Binds to the 23S rRNA. This Sulfolobus acidocaldarius (strain ATCC 33909 / DSM 639 / JCM 8929 / NBRC 15157 / NCIMB 11770) protein is Large ribosomal subunit protein eL37.